Reading from the N-terminus, the 308-residue chain is Olfactory receptor OR9H1 (308 aa).

The Extracellular portion of the chain corresponds to 1–26 (MVNFTHVSEFVLLGFQGGPGMQAMLF). The chain crosses the membrane as a helical span at residues 27-47 (LIFLILYGIAVVGNLGMIVII). Residues 48–58 (WVDAHLHTPMY) are Cytoplasmic-facing. Residues 59 to 81 (AFLQSLSLLDICYSSTIAPRALA) form a helical membrane-spanning segment. The Extracellular segment spans residues 82-95 (NSMQEDHTISFGGC). An intrachain disulfide couples Cys95 to Cys177. Residues 96 to 116 (AAQFFFLSLFGITEAFLLAAM) form a helical membrane-spanning segment. At 117–137 (AYDRFIAICNPLLYSVSMSHQ) the chain is on the cytoplasmic side. A helical transmembrane segment spans residues 138 to 158 (VCVLLISGSYLWGVVNAIAQT). Residues 159–203 (TMTFRLPFCGSNEINDFFCDVPPLLSLSCSDTFINQLVLLGLCGS) lie on the Extracellular side of the membrane. A helical transmembrane segment spans residues 204–224 (IIVSTFLIVLVSYIYIISTIL). Over 225 to 245 (RIPTMQGCQKAFSTCASHLTG) the chain is Cytoplasmic. A helical membrane pass occupies residues 246 to 266 (VCLFFGTVFFMYAQPSAIFFM). Residues 267 to 269 (EQS) lie on the Extracellular side of the membrane. A helical membrane pass occupies residues 270-290 (KIVSIFYTMVIPMLNPLIYSL). Residues 291 to 308 (RNKEVKQALRRSMQKLSL) lie on the Cytoplasmic side of the membrane.

It belongs to the G-protein coupled receptor 1 family.

It localises to the cell membrane. Functionally, odorant receptor. In Homo sapiens (Human), this protein is Olfactory receptor OR9H1.